The following is a 323-amino-acid chain: Beta-ketoacyl-[acyl-carrier-protein] synthase III (323 aa).

Active-site residues include cysteine 113 and histidine 250. The tract at residues 251 to 255 (QANKR) is ACP-binding. The active site involves asparagine 280.

This sequence belongs to the thiolase-like superfamily. FabH family. Homodimer.

The protein localises to the cytoplasm. The enzyme catalyses malonyl-[ACP] + acetyl-CoA + H(+) = 3-oxobutanoyl-[ACP] + CO2 + CoA. It participates in lipid metabolism; fatty acid biosynthesis. Functionally, catalyzes the condensation reaction of fatty acid synthesis by the addition to an acyl acceptor of two carbons from malonyl-ACP. Catalyzes the first condensation reaction which initiates fatty acid synthesis and may therefore play a role in governing the total rate of fatty acid production. Possesses both acetoacetyl-ACP synthase and acetyl transacylase activities. Its substrate specificity determines the biosynthesis of branched-chain and/or straight-chain of fatty acids. This Chelativorans sp. (strain BNC1) protein is Beta-ketoacyl-[acyl-carrier-protein] synthase III.